We begin with the raw amino-acid sequence, 245 residues long: 1-(5-phosphoribosyl)-5-[(5-phosphoribosylamino)methylideneamino] imidazole-4-carboxamide isomerase (245 aa).

The Proton acceptor role is filled by Asp7. The Proton donor role is filled by Asp129.

Belongs to the HisA/HisF family.

It localises to the cytoplasm. The catalysed reaction is 1-(5-phospho-beta-D-ribosyl)-5-[(5-phospho-beta-D-ribosylamino)methylideneamino]imidazole-4-carboxamide = 5-[(5-phospho-1-deoxy-D-ribulos-1-ylimino)methylamino]-1-(5-phospho-beta-D-ribosyl)imidazole-4-carboxamide. It participates in amino-acid biosynthesis; L-histidine biosynthesis; L-histidine from 5-phospho-alpha-D-ribose 1-diphosphate: step 4/9. In Buchnera aphidicola subsp. Cinara cedri (strain Cc), this protein is 1-(5-phosphoribosyl)-5-[(5-phosphoribosylamino)methylideneamino] imidazole-4-carboxamide isomerase.